Reading from the N-terminus, the 73-residue chain is Translation initiation factor IF-1 (73 aa).

An S1-like domain is found at 1 to 73 (MAKKDGVIEI…TRGRIVYRYK (73 aa)).

This sequence belongs to the IF-1 family. In terms of assembly, component of the 30S ribosomal translation pre-initiation complex which assembles on the 30S ribosome in the order IF-2 and IF-3, IF-1 and N-formylmethionyl-tRNA(fMet); mRNA recruitment can occur at any time during PIC assembly.

It is found in the cytoplasm. Functionally, one of the essential components for the initiation of protein synthesis. Stabilizes the binding of IF-2 and IF-3 on the 30S subunit to which N-formylmethionyl-tRNA(fMet) subsequently binds. Helps modulate mRNA selection, yielding the 30S pre-initiation complex (PIC). Upon addition of the 50S ribosomal subunit IF-1, IF-2 and IF-3 are released leaving the mature 70S translation initiation complex. The sequence is that of Translation initiation factor IF-1 from Paenarthrobacter aurescens (strain TC1).